The following is a 327-amino-acid chain: Interleukin-12 subunit beta (327 aa).

The signal sequence occupies residues 1–22 (MCLQQLVISWVSLVWLASPLLA). In terms of domain architecture, Ig-like C2-type spans 23–106 (IWELEKNVYV…LSQMLLLLHK (84 aa)). C50 and C90 are disulfide-bonded. N134 and N152 each carry an N-linked (GlcNAc...) asparagine glycan. In terms of domain architecture, Fibronectin type-III spans 237 to 327 (PPKNLKMKPS…WSEWATMSCP (91 aa)).

This sequence belongs to the IL-12B family. As to quaternary structure, heterodimer with IL12A; disulfide-linked. The heterodimer is known as interleukin IL-12. Heterodimer with IL23A; disulfide-linked. The heterodimer is known as interleukin IL-23. Also secreted as a monomer. Interacts with NBR1; this interaction promotes IL-12 secretion.

Its subcellular location is the secreted. In terms of biological role, cytokine that can act as a growth factor for activated T and NK cells, enhance the lytic activity of NK/lymphokine-activated killer cells, and stimulate the production of IFN-gamma by resting PBMC. Its function is as follows. Associates with IL23A to form the IL-23 interleukin, a heterodimeric cytokine which functions in innate and adaptive immunity. IL-23 may constitute with IL-17 an acute response to infection in peripheral tissues. IL-23 binds to a heterodimeric receptor complex composed of IL12RB1 and IL23R, activates the Jak-Stat signaling cascade, stimulates memory rather than naive T-cells and promotes production of pro-inflammatory cytokines. IL-23 induces autoimmune inflammation and thus may be responsible for autoimmune inflammatory diseases and may be important for tumorigenesis. The chain is Interleukin-12 subunit beta (IL12B) from Marmota monax (Woodchuck).